Reading from the N-terminus, the 431-residue chain is Serine/threonine-protein kinase Sgk1 (431 aa).

The necessary for localization to the mitochondria stretch occupies residues 1–60 (MTVKTEAARGPLTYSRMRGMVAILIAFMKQRRMGLNDFIQKIANNSYACKHTEVQSILKI). The interval 66–92 (PELMNANPSPPPSPSQQINLGPSSNPH) is disordered. S74 carries the post-translational modification Phosphoserine. The residue at position 78 (S78) is a Phosphoserine; by MAPK7. The span at 81–91 (QQINLGPSSNP) shows a compositional bias: polar residues. The Protein kinase domain occupies 98–355 (FHFLKVIGKG…FMEIRNHVFF (258 aa)). Residues 104-112 (IGKGSFGKV) and K127 each bind ATP. Residues 131–141 (KKAILKKKEEK) carry the Nuclear localization signal motif. Catalysis depends on D222, which acts as the Proton acceptor. T256 carries the phosphothreonine; by PDPK1 modification. Positions 356–431 (SLINWDDLIN…SYAPPMDSFL (76 aa)) constitute an AGC-kinase C-terminal domain. The residue at position 369 (T369) is a Phosphothreonine; by PKA. S397, S401, and S422 each carry phosphoserine.

It belongs to the protein kinase superfamily. AGC Ser/Thr protein kinase family. Homodimer; disulfide-linked. Forms a trimeric complex with FBXW7 and NOTCH1. Interacts with MAPK3/ERK1, MAPK1/ERK2, MAP2K1/MEK1, MAP2K2/MEK2, NEDD4, NEDD4L, MAPT/TAU, MAPK7, CREB1, SLC9A3R2/NHERF2 and KCNJ1/ROMK1. Associates with the mammalian target of rapamycin complex 2 (mTORC2) via an interaction with MAPKAP1/SIN1. Post-translationally, regulated by phosphorylation. Activated by phosphorylation on Ser-422 by mTORC2, transforming it into a substrate for PDPK1 which phosphorylates it on Thr-256. Phosphorylation on Ser-397 and Ser-401 are also essential for its activity. Phosphorylation on Ser-78 by MAPK7 is required for growth factor-induced cell cycle progression. Ubiquitinated by NEDD4L; which promotes proteasomal degradation. Ubiquitinated by SYVN1 at the endoplasmic reticulum; which promotes rapid proteasomal degradation and maintains a high turnover rate in resting cells.

The protein localises to the cytoplasm. It is found in the nucleus. Its subcellular location is the endoplasmic reticulum membrane. The protein resides in the cell membrane. It localises to the mitochondrion. It catalyses the reaction L-seryl-[protein] + ATP = O-phospho-L-seryl-[protein] + ADP + H(+). The enzyme catalyses L-threonyl-[protein] + ATP = O-phospho-L-threonyl-[protein] + ADP + H(+). Two specific sites, one in the kinase domain (Thr-256) and the other in the C-terminal regulatory region (Ser-422), need to be phosphorylated for its full activation. Phosphorylation at Ser-397 and Ser-401 are also essential for its activity. Activated by WNK1, WNK2, WNK3 and WNK4; which promote phosphorylation by mTORC2. Functionally, serine/threonine-protein kinase which is involved in the regulation of a wide variety of ion channels, membrane transporters, cellular enzymes, transcription factors, neuronal excitability, cell growth, proliferation, survival, migration and apoptosis. Plays an important role in cellular stress response. Contributes to regulation of renal Na(+) retention, renal K(+) elimination, salt appetite, gastric acid secretion, intestinal Na(+)/H(+) exchange and nutrient transport, insulin-dependent salt sensitivity of blood pressure, salt sensitivity of peripheral glucose uptake, cardiac repolarization and memory consolidation. Up-regulates Na(+) channels: SCNN1A/ENAC, SCN5A and ASIC1/ACCN2, K(+) channels: KCNJ1/ROMK1, KCNA1-5, KCNQ1-5 and KCNE1, epithelial Ca(2+) channels: TRPV5 and TRPV6, chloride channels: BSND, CLCN2 and CFTR, glutamate transporters: SLC1A3/EAAT1, SLC1A2 /EAAT2, SLC1A1/EAAT3, SLC1A6/EAAT4 and SLC1A7/EAAT5, amino acid transporters: SLC1A5/ASCT2, SLC38A1/SN1 and SLC6A19, creatine transporter: SLC6A8, Na(+)/dicarboxylate cotransporter: SLC13A2/NADC1, Na(+)-dependent phosphate cotransporter: SLC34A2/NAPI-2B, glutamate receptor: GRIK2/GLUR6. Up-regulates carriers: SLC9A3/NHE3, SLC12A1/NKCC2, SLC12A3/NCC, SLC5A3/SMIT, SLC2A1/GLUT1, SLC5A1/SGLT1 and SLC15A2/PEPT2. Regulates enzymes: GSK3A/B, PMM2 and Na(+)/K(+) ATPase, and transcription factors: CTNNB1 and nuclear factor NF-kappa-B. Stimulates sodium transport into epithelial cells by enhancing the stability and expression of SCNN1A/ENAC. This is achieved by phosphorylating the NEDD4L ubiquitin E3 ligase, promoting its interaction with 14-3-3 proteins, thereby preventing it from binding to SCNN1A/ENAC and targeting it for degradation. Regulates store-operated Ca(+2) entry (SOCE) by stimulating ORAI1 and STIM1. Regulates KCNJ1/ROMK1 directly via its phosphorylation or indirectly via increased interaction with SLC9A3R2/NHERF2. Phosphorylates MDM2 and activates MDM2-dependent ubiquitination of p53/TP53. Phosphorylates MAPT/TAU and mediates microtubule depolymerization and neurite formation in hippocampal neurons. Phosphorylates SLC2A4/GLUT4 and up-regulates its activity. Phosphorylates APBB1/FE65 and promotes its localization to the nucleus. Phosphorylates MAPK1/ERK2 and activates it by enhancing its interaction with MAP2K1/MEK1 and MAP2K2/MEK2. Phosphorylates FBXW7 and plays an inhibitory role in the NOTCH1 signaling. Phosphorylates FOXO1 resulting in its relocalization from the nucleus to the cytoplasm. Phosphorylates FOXO3, promoting its exit from the nucleus and interference with FOXO3-dependent transcription. Phosphorylates BRAF and MAP3K3/MEKK3 and inhibits their activity. Phosphorylates SLC9A3/NHE3 in response to dexamethasone, resulting in its activation and increased localization at the cell membrane. Phosphorylates CREB1. Necessary for vascular remodeling during angiogenesis. In Oryctolagus cuniculus (Rabbit), this protein is Serine/threonine-protein kinase Sgk1 (SGK1).